A 338-amino-acid polypeptide reads, in one-letter code: Fructose-1,6-bisphosphatase class 1 (338 aa).

Mg(2+) is bound by residues Glu92, Asp113, Leu115, and Asp116. Residues 116–119 (DGSS), Asn208, and Lys274 contribute to the substrate site. Glu280 contacts Mg(2+).

This sequence belongs to the FBPase class 1 family. Homotetramer. The cofactor is Mg(2+).

The protein resides in the cytoplasm. It carries out the reaction beta-D-fructose 1,6-bisphosphate + H2O = beta-D-fructose 6-phosphate + phosphate. It functions in the pathway carbohydrate biosynthesis; gluconeogenesis. In Paramagnetospirillum magneticum (strain ATCC 700264 / AMB-1) (Magnetospirillum magneticum), this protein is Fructose-1,6-bisphosphatase class 1.